The following is a 370-amino-acid chain: Proto-oncogene Wnt-1 (370 aa).

The N-terminal stretch at 1 to 27 (MGLWALLPGWVSATLLLALAALPAALA) is a signal peptide. A glycan (N-linked (GlcNAc...) asparagine) is linked at Asn-29. 11 disulfide bridges follow: Cys-93–Cys-104, Cys-143–Cys-151, Cys-153–Cys-170, Cys-218–Cys-232, Cys-220–Cys-227, Cys-299–Cys-330, Cys-315–Cys-325, Cys-329–Cys-369, Cys-345–Cys-360, Cys-347–Cys-357, and Cys-352–Cys-353. Ser-224 is lipidated: O-palmitoleoyl serine; by PORCN. Residues Asn-316 and Asn-346 are each glycosylated (N-linked (GlcNAc...) asparagine). Asn-359 carries an N-linked (GlcNAc...) asparagine glycan.

This sequence belongs to the Wnt family. Forms a soluble 1:1 complex with AFM; this prevents oligomerization and is required for prolonged biological activity. The complex with AFM may represent the physiological form in body fluids. Interacts with PORCN. Interacts with RSPO1, RSPO2 and RSPO3. Interacts with WLS. In terms of processing, palmitoleoylation is required for efficient binding to frizzled receptors. Palmitoleoylation is necessary for proper trafficking to cell surface. Depalmitoleoylated by NOTUM, leading to inhibit Wnt signaling pathway.

It is found in the secreted. Its subcellular location is the extracellular space. The protein resides in the extracellular matrix. Functionally, ligand for members of the frizzled family of seven transmembrane receptors. Acts in the canonical Wnt signaling pathway by promoting beta-catenin-dependent transcriptional activation. In some developmental processes, is also a ligand for the coreceptor RYK, thus triggering Wnt signaling. Plays an essential role in the development of the embryonic brain and central nervous system (CNS). Has a role in osteoblast function, bone development and bone homeostasis. This is Proto-oncogene Wnt-1 (WNT1) from Homo sapiens (Human).